Consider the following 305-residue polypeptide: Putative cuticle collagen 90 (305 aa).

Disordered stretches follow at residues 95–117 (AGPP…GDLG) and 146–305 (PPGQ…AKRH). 4 triple-helical region regions span residues 96-125 (GPPG…SGIS), 142-204 (GPAG…PGTA), 208-252 (GAVG…NGRD), and 256-270 (GQPG…VGKD). The span at 150-162 (QGPVGPQGFPGVV) shows a compositional bias: low complexity. Basic and acidic residues predominate over residues 278-288 (ARRDSKTESVH).

This sequence belongs to the cuticular collagen family. Collagen polypeptide chains are complexed within the cuticle by disulfide bonds and other types of covalent cross-links.

Functionally, nematode cuticles are composed largely of collagen-like proteins. The cuticle functions both as an exoskeleton and as a barrier to protect the worm from its environment. The sequence is that of Putative cuticle collagen 90 (col-90) from Caenorhabditis elegans.